Reading from the N-terminus, the 1623-residue chain is ABC transporter C family member 2 (1623 aa).

9 consecutive transmembrane segments (helical) span residues 37 to 57 (FVLG…IWLA), 76 to 96 (FLAL…IMGI), 109 to 129 (FEAF…VMIL), 145 to 165 (FAVI…LSVK), 172 to 192 (VLYL…LLFM), 336 to 356 (AWMG…GVLC), 440 to 460 (VASL…TVII), 527 to 547 (FILN…FTLL), and 557 to 577 (FTSL…PNII). An ABC transmembrane type-1 1 domain is found at 302 to 582 (FWWGGFWKIG…LPNIITQVVN (281 aa)). An ABC transporter 1 domain is found at 614–838 (ISIRNGYFSW…GPLFQRLMEN (225 aa)). ATP is bound at residue 649-656 (GSTGEGKT). Positions 842 to 890 (VEEYSEENGEAEADQTAEQPVANGNTNGLQMDGSDDKKSKEGNKKGGKS) are disordered. Over residues 845–856 (YSEENGEAEADQ) the composition is skewed to acidic residues. Positions 857 to 870 (TAEQPVANGNTNGL) are enriched in polar residues. The segment covering 875-885 (SDDKKSKEGNK) has biased composition (basic and acidic residues). The next 6 membrane-spanning stretches (helical) occupy residues 914–934 (ALGG…TEVF), 955–975 (GPLF…LVTL), 1032–1054 (AVFV…LIGI), 1058–1077 (LSLW…YLYY), 1143–1163 (LGIR…SFAV), and 1177–1197 (STMG…TGVL). The ABC transmembrane type-1 2 domain occupies 921–1205 (VMMLLLCYVL…VLRLASLAEN (285 aa)). The interaction with calmodulin and FKP42/TWD1 stretch occupies residues 1236-1251 (WPSSGSIKFEDVVLRY). The ABC transporter 2 domain maps to 1242–1476 (IKFEDVVLRY…EGSSFSKMVQ (235 aa)). 1276 to 1283 (GRTGAGKS) is a binding site for ATP.

The protein belongs to the ABC transporter superfamily. ABCC family. Conjugate transporter (TC 3.A.1.208) subfamily. In terms of assembly, interacts with FKBP42/TWD1 and probably with calmodulin (CaM). In terms of tissue distribution, ubiquitous, at low levels.

The protein resides in the vacuole membrane. It catalyses the reaction ATP + H2O + xenobioticSide 1 = ADP + phosphate + xenobioticSide 2.. Its activity is regulated as follows. Reciprocal promotion of DNP-GS and E(2)17betaG uptake. E(2)17betaG uptake is also stimulated by GSH and S-methyl-glutathione (S-methyl-GS), and, to a lower extent, by GSSG and C3G-GS. Metolachlor-GS and decyl-GS slightly inhibit E(2)17betaG uptake. Pump for glutathione S-conjugates. Mediates the transport of S-conjugates such as GSH, S-(2,4-dinitrophenyl)-glutathione (DNP-GS), GSSG, cyanidin 3-glucoside-GS (C3G-GS) and metolachlor-GS (MOC-GS), glucuronides such as 17-beta-estradiol 17-(beta-D-glucuronide) (E(2)17betaG), and of the chlorophyll catabolite such as B.napus nonfluorescent chlorophyll catabolite (Bn-NCC-1). This Arabidopsis thaliana (Mouse-ear cress) protein is ABC transporter C family member 2 (ABCC2).